The following is a 775-amino-acid chain: Putative ankyrin repeat protein RBE_0801 (775 aa).

ANK repeat units follow at residues 66–95 (HSLPQLSLTLQSSNNELVPSILSKITENTE), 300–329 (ATTVDLHSAVKFNNLAVLNRLLDKTEKVEN), 331–356 (ILQEAIQEHKIEIAEMLINSNKIKSF), 357–385 (TNDYLLVAINANNLPILKILLNKEENIVG), 447–476 (IPDVIFDSVIERGNTQIIKILLEKIASFDF), and 523–552 (GDDKILDIAIKLGDSSVVNNILDEKEKQGI).

This is Putative ankyrin repeat protein RBE_0801 from Rickettsia bellii (strain RML369-C).